A 162-amino-acid chain; its full sequence is Cyclic pyranopterin monophosphate synthase (162 aa).

Residues 75–77 and 113–114 each bind substrate; these read LCH and ME. Aspartate 128 is an active-site residue.

Belongs to the MoaC family. In terms of assembly, homohexamer; trimer of dimers.

It carries out the reaction (8S)-3',8-cyclo-7,8-dihydroguanosine 5'-triphosphate = cyclic pyranopterin phosphate + diphosphate. The protein operates within cofactor biosynthesis; molybdopterin biosynthesis. Functionally, catalyzes the conversion of (8S)-3',8-cyclo-7,8-dihydroguanosine 5'-triphosphate to cyclic pyranopterin monophosphate (cPMP). In Xanthobacter autotrophicus (strain ATCC BAA-1158 / Py2), this protein is Cyclic pyranopterin monophosphate synthase.